Reading from the N-terminus, the 357-residue chain is Nitronate monooxygenase npaC (357 aa).

FMN is bound by residues Gln167, Gly172, and Gly206.

The protein belongs to the nitronate monooxygenase family. NMO class I subfamily. Requires FMN as cofactor.

Nitronate monooxygenase; part of the gene cluster that mediates the biosynthesis of the deadly neurotoxic nitroalkane 3-nitropropanoic acid (3-NPA) that acts as an antimetabolite of succinate and irreversibly inhibits succinate dehydrogenase and disrupts mitochondrial oxidative phosphorylation. Catalyzes the oxidation of 3-NPA to nitrite and malonic semialdehyde. NpaC is not conserved in all fungal npa clusters and, while it is possible that it serves as a self-protection mechanism against accumulation of 3-NPA (by npaA and npaB) in the producing host, the more likely scenario may be the three enzymes representing an alternative catabolic pathway of aspartate to generate readily metabolizable nitrogen and carbon sources. This is Nitronate monooxygenase npaC from Metarhizium robertsii (strain ARSEF 23 / ATCC MYA-3075) (Metarhizium anisopliae (strain ARSEF 23)).